We begin with the raw amino-acid sequence, 351 residues long: D-alanine--D-alanine ligase (351 aa).

Residues 135–343 (NQIFLQSGQK…MEEVFADLIE (209 aa)) form the ATP-grasp domain. 167–222 (LMSLGFPQFLKPVEGGSSVSTYKITNQEQLSRQLALIFESDSKVMSQSFLAGTEVS) contacts ATP. Residues Asp-298, Glu-310, and Asn-312 each contribute to the Mg(2+) site.

The protein belongs to the D-alanine--D-alanine ligase family. Mg(2+) is required as a cofactor. Mn(2+) serves as cofactor.

The protein resides in the cytoplasm. The catalysed reaction is 2 D-alanine + ATP = D-alanyl-D-alanine + ADP + phosphate + H(+). Its pathway is cell wall biogenesis; peptidoglycan biosynthesis. Cell wall formation. The protein is D-alanine--D-alanine ligase of Leptospira borgpetersenii serovar Hardjo-bovis (strain JB197).